Reading from the N-terminus, the 165-residue chain is MRIDPSTLDLKEKVVSISRVTKVVKGGRNFRFSALVVVGDENGHVGVGTGKSIEIPEAIRKGIEDAKKNLVEVSIVGTTVPHEIHGKFGTGDVLIMPATEGTGVIAGGPARSVLELAGLKDVRAKSLGSNNPRNMVKATINGLANLRTAEDIAKLRGKSVEEIIG.

The S5 DRBM domain maps to 10 to 73 (LKEKVVSISR…EDAKKNLVEV (64 aa)).

The protein belongs to the universal ribosomal protein uS5 family. As to quaternary structure, part of the 30S ribosomal subunit. Contacts proteins S4 and S8.

In terms of biological role, with S4 and S12 plays an important role in translational accuracy. Its function is as follows. Located at the back of the 30S subunit body where it stabilizes the conformation of the head with respect to the body. The protein is Small ribosomal subunit protein uS5 of Clostridium perfringens (strain ATCC 13124 / DSM 756 / JCM 1290 / NCIMB 6125 / NCTC 8237 / Type A).